The chain runs to 572 residues: Mitochondrial chaperone TCM62 (572 aa).

The N-terminal 16 residues, 1 to 16, are a transit peptide targeting the mitochondrion; that stretch reads MLRNCLRKLGNHQTKC. At 17 to 471 the chain is on the mitochondrial matrix side; sequence SVKTLHTPIY…KANEPNFMTK (455 aa). Residues 472–488 traverse the membrane as a helical segment; sequence VGINAVLSAVILPSEVA. The Mitochondrial intermembrane segment spans residues 489-572; sequence FKNAYGYNYY…VYKKPERHKA (84 aa).

Belongs to the chaperonin (HSP60) family. In terms of assembly, forms a high molecular mass protein complex of approximately 850 kDa.

The protein resides in the mitochondrion inner membrane. In terms of biological role, chaperone. Required for the assembly of succinate dehydrogenase subunits. Ensures mitochondrial gene expression at elevated temperatures and prevents heat-aggregation of the ribosomal subunit VAR1. This is Mitochondrial chaperone TCM62 (TCM62) from Saccharomyces cerevisiae (strain ATCC 204508 / S288c) (Baker's yeast).